A 416-amino-acid polypeptide reads, in one-letter code: Keratin, type I cuticular Ha1 (416 aa).

Residues 1–56 (MPYNFCLPSLSCRTSCSSRPCVPPSCHSCTLPGACNIPANVSNCNWFCEGSFNGSE) form a head region. Residues 56 to 367 (EKETMQFLND…SLLESEDCNL (312 aa)) enclose the IF rod domain. The segment at 57–91 (KETMQFLNDRLASYLEKVRQLERDNAELENLIRER) is coil 1A. Positions 92–102 (SQQQEPLLCPS) are linker 1. The interval 103–203 (YQSYFKTIEE…HEQEVNTLRC (101 aa)) is coil 1B. Residues 204 to 219 (QLGDRLNVEVDAAPTV) are linker 12. The segment at 220–363 (DLNRVLNETR…NTYRSLLESE (144 aa)) is coil 2. A tail region spans residues 364-416 (DCNLPSNPCATTNACSKPIGPCLSNPCTPCVPPAPCTPCAPRPRCGPCNSFVR).

The protein belongs to the intermediate filament family.

In Pan troglodytes (Chimpanzee), this protein is Keratin, type I cuticular Ha1 (KRT31).